The chain runs to 644 residues: Exoribonuclease 2 (644 aa).

An RNB domain is found at 189-516; the sequence is REDLTALDFV…NHRLLKAVIK (328 aa). The region spanning 561–643 is the S1 motif domain; that stretch reads DTRFAAEIVD…ETRSIIARPV (83 aa).

Belongs to the RNR ribonuclease family. RNase II subfamily.

The protein localises to the cytoplasm. The catalysed reaction is Exonucleolytic cleavage in the 3'- to 5'-direction to yield nucleoside 5'-phosphates.. Functionally, involved in mRNA degradation. Hydrolyzes single-stranded polyribonucleotides processively in the 3' to 5' direction. This is Exoribonuclease 2 from Escherichia coli O17:K52:H18 (strain UMN026 / ExPEC).